Reading from the N-terminus, the 445-residue chain is Cyclin-B1-2 (445 aa).

It belongs to the cyclin family. Cyclin AB subfamily. Interacts with FZR2/CCS52A1, FZR1/CCS52A2 and FZR3/CCS52B. Expressed in roots, stems and flowers.

May induce mitotic cell division. This is Cyclin-B1-2 (CYCB1-2) from Arabidopsis thaliana (Mouse-ear cress).